Here is a 319-residue protein sequence, read N- to C-terminus: D-ribose/D-allose-binding protein (319 aa).

An N-terminal signal peptide occupies residues 1–29 (MKRVASRRLLAAVVLTACSSFLPLSAVHA).

Belongs to the bacterial solute-binding protein 2 family.

The protein localises to the periplasm. Functionally, binds specifically both D-ribose and D-allose, with affinities in the lower micromolar range. This is D-ribose/D-allose-binding protein from Pseudomonas aeruginosa (strain ATCC 15692 / DSM 22644 / CIP 104116 / JCM 14847 / LMG 12228 / 1C / PRS 101 / PAO1).